Reading from the N-terminus, the 487-residue chain is DNA polymerase delta small subunit (487 aa).

Residue Met1 is modified to N-acetylmethionine. Phosphoserine is present on Ser20.

The protein belongs to the DNA polymerase delta/II small subunit family. DNA polymerase delta is a heterotrimer of POL3, POL32 and HYS2.

The protein localises to the nucleus. It carries out the reaction DNA(n) + a 2'-deoxyribonucleoside 5'-triphosphate = DNA(n+1) + diphosphate. DNA polymerase delta (DNA polymerase III) participates in chromosomal DNA replication. It is required during synthesis of the leading and lagging DNA strands at the replication fork and binds at/or near replication origins and moves along DNA with the replication fork. It has 3'-5' proofreading exonuclease activity that correct errors arising during DNA replication. It is also involved in DNA synthesis during DNA repair. This Saccharomyces cerevisiae (strain ATCC 204508 / S288c) (Baker's yeast) protein is DNA polymerase delta small subunit (POL31).